A 456-amino-acid chain; its full sequence is tRNA-2-methylthio-N(6)-dimethylallyladenosine synthase (456 aa).

In terms of domain architecture, MTTase N-terminal spans 17 to 135; sequence KLYLIQSFGC…LPRMIHQVQE (119 aa). C26, C62, C96, C172, C176, and C179 together coordinate [4Fe-4S] cluster. One can recognise a Radical SAM core domain in the interval 158-387; that stretch reads RKDKLKAWVT…IELQNLISLE (230 aa). Residues 390 to 453 enclose the TRAM domain; that stretch reads QREEGRVLEV…PNLLEGEVVP (64 aa).

Belongs to the methylthiotransferase family. MiaB subfamily. As to quaternary structure, monomer. [4Fe-4S] cluster is required as a cofactor.

The protein resides in the cytoplasm. It carries out the reaction N(6)-dimethylallyladenosine(37) in tRNA + (sulfur carrier)-SH + AH2 + 2 S-adenosyl-L-methionine = 2-methylsulfanyl-N(6)-dimethylallyladenosine(37) in tRNA + (sulfur carrier)-H + 5'-deoxyadenosine + L-methionine + A + S-adenosyl-L-homocysteine + 2 H(+). Its function is as follows. Catalyzes the methylthiolation of N6-(dimethylallyl)adenosine (i(6)A), leading to the formation of 2-methylthio-N6-(dimethylallyl)adenosine (ms(2)i(6)A) at position 37 in tRNAs that read codons beginning with uridine. The protein is tRNA-2-methylthio-N(6)-dimethylallyladenosine synthase of Desulforamulus reducens (strain ATCC BAA-1160 / DSM 100696 / MI-1) (Desulfotomaculum reducens).